Here is a 338-residue protein sequence, read N- to C-terminus: Histidinol-phosphate aminotransferase (338 aa).

Lys-204 carries the N6-(pyridoxal phosphate)lysine modification.

This sequence belongs to the class-II pyridoxal-phosphate-dependent aminotransferase family. Histidinol-phosphate aminotransferase subfamily. Pyridoxal 5'-phosphate is required as a cofactor.

It carries out the reaction L-histidinol phosphate + 2-oxoglutarate = 3-(imidazol-4-yl)-2-oxopropyl phosphate + L-glutamate. It participates in amino-acid biosynthesis; L-histidine biosynthesis; L-histidine from 5-phospho-alpha-D-ribose 1-diphosphate: step 7/9. The polypeptide is Histidinol-phosphate aminotransferase (Pyrococcus furiosus (strain ATCC 43587 / DSM 3638 / JCM 8422 / Vc1)).